A 98-amino-acid polypeptide reads, in one-letter code: DNA-binding protein Fis (98 aa).

Residues 74–93 (QTRAATMMGINRGTLRKKLK) constitute a DNA-binding region (H-T-H motif).

It belongs to the transcriptional regulatory Fis family. In terms of assembly, homodimer.

Functionally, activates ribosomal RNA transcription. Plays a direct role in upstream activation of rRNA promoters. This Vibrio atlanticus (strain LGP32) (Vibrio splendidus (strain Mel32)) protein is DNA-binding protein Fis.